The sequence spans 435 residues: Diguanylate cyclase TpbB (435 aa).

Residues 1 to 22 (MNRRRRYTGSNPSLRRVLYRAH) are Cytoplasmic-facing. Residues 23 to 43 (LGVALVAVFTAGLAVTLVGLL) form a helical membrane-spanning segment. The Periplasmic segment spans residues 44–154 (TLRAYADPNQ…VKGSGGSLLR (111 aa)). Residues 155–175 (FLLTGFAGMVLCLLLTALGAF) form a helical membrane-spanning segment. Topologically, residues 176–435 (YLSRRLVRGI…DSATPEAPPK (260 aa)) are cytoplasmic. The region spanning 183–236 (RGIVGPLDQLAKVAHTVRRERDFEKRVPEAGIAELSQLGEDFNALLDELESWQA) is the HAMP domain. In terms of domain architecture, GGDEF spans 279 to 415 (EQLAVLFIDS…GSRRLAELND (137 aa)). S288 and D330 together coordinate Mg(2+). D330 serves as the catalytic Proton acceptor. Positions 413 to 426 (LNDPRILQEEKEID) are enriched in basic and acidic residues. The disordered stretch occupies residues 413-435 (LNDPRILQEEKEIDSATPEAPPK).

As to quaternary structure, homodimer. Interacts with YfiR. Mg(2+) serves as cofactor. In terms of processing, phosphorylated at both Tyr residues and Ser/Thr residues. Dephosphorylated and inactivated by TpbA.

Its subcellular location is the cell inner membrane. The enzyme catalyses 2 GTP = 3',3'-c-di-GMP + 2 diphosphate. The protein operates within purine metabolism; 3',5'-cyclic di-GMP biosynthesis. Its activity is regulated as follows. Activity is tightly controlled by YfiR, a small periplasmic protein, and the OmpA/Pal-like outer-membrane lipoprotein YfiB. Diguanylate cyclase activity is inhibited by the specific interaction of YfiR with the TpbB periplasmic domain and is activated by YfiB, which releases the YfiR-mediated repression through sequestration of YfiR to the outer membrane. Release of repression leads to a conformational shift in TpbB/YfiN that propagates through the PAS and transmembrane domains to switch the cytoplasmic HAMP domain from an inactive to an active conformation and activate the C-terminal catalytic GGDEF domain. Thus, TpbB/YfiN appears to function by switching between discrete inactive and active functional states depending on the presence or absence of bound YfiR. Activity is also controlled by dephosphorylation of the periplasmic domain by the tyrosine phosphatase TpbA. These two mechanisms of regulation could in principle work in parallel or as part of the same regulatory pathway. Does not undergo product feedback inhibition. Catalyzes the synthesis of cyclic-di-GMP (c-di-GMP) via the condensation of 2 GTP molecules. Its function is as follows. Part of the YfiB-TpbB-YfiR (or yfiBNR) system, encoding a tripartite signaling module that modulates intracellular c-di-GMP levels. The system is a key regulator of the small colony variant (SCV) phenotype, and plays an important role in biofilm formation and in vivo persistence. The c-di-GMP produced by TpbB/YfiN stimulates the production of the Pel and Psl exopolysaccharides, which promotes surface attachment, generates an SCV phenotype and confers resistance against phagocytosis. The chain is Diguanylate cyclase TpbB from Pseudomonas aeruginosa (strain ATCC 15692 / DSM 22644 / CIP 104116 / JCM 14847 / LMG 12228 / 1C / PRS 101 / PAO1).